We begin with the raw amino-acid sequence, 338 residues long: Phenylalanine--tRNA ligase alpha subunit (338 aa).

A Mg(2+)-binding site is contributed by glutamate 253.

Belongs to the class-II aminoacyl-tRNA synthetase family. Phe-tRNA synthetase alpha subunit type 1 subfamily. In terms of assembly, tetramer of two alpha and two beta subunits. Requires Mg(2+) as cofactor.

The protein localises to the cytoplasm. The enzyme catalyses tRNA(Phe) + L-phenylalanine + ATP = L-phenylalanyl-tRNA(Phe) + AMP + diphosphate + H(+). The chain is Phenylalanine--tRNA ligase alpha subunit from Geotalea daltonii (strain DSM 22248 / JCM 15807 / FRC-32) (Geobacter daltonii).